Here is a 487-residue protein sequence, read N- to C-terminus: MLKIAILGRPNVGKSSLFNRLCKRSLAIVNSQEGTTRDRLYGELHAFGVPAQVIDTGGVDHNSEDYFQKHIYNQALTGAKEADVLLLVIDIRCGITEEDAHLAKLLLPLKKPLILVANKADSRQEELQIHETYKLGIRDIVVTSTAHDKHIDTLLQRIKLVANLPEPREEEEEGLEELSVDEHEESEAALPSNTFPDFSEVFTEGFSPEEPCTIPESPQQAPKTLKIALIGRPNVGKSSIINGLLNEERCIIDNTPGTTRDNIDILYSHKDRQYLFIDTAGLRKMKSVKNSIEWISSSRTEKAISRADICLLVIDATQKLSSYEKRILSLISKRKKPHIILINKWDLLEEVRMEHYCKDLRATDPYLGQAKMLCISATTKRNLKKIFSAIDELHHVVSNKVPTPIVNKTLASALHRNHPQVIQGRRLRIYYAIQKTTTPLQFLLFINAKSLLTKHYEYYLKNTLKSSFNLYGIPFDLEFKEKPKRHN.

In terms of domain architecture, EngA-type G 1 spans leucine 2–glutamate 166. GTP contacts are provided by residues glycine 8–serine 15, aspartate 55–valine 59, and asparagine 118–aspartate 121. A disordered region spans residues proline 165–threonine 194. Positions arginine 168–glutamate 187 are enriched in acidic residues. The region spanning leucine 225 to serine 398 is the EngA-type G 2 domain. Residues glycine 231–serine 238, aspartate 278–leucine 282, and asparagine 343–aspartate 346 each bind GTP. Residues asparagine 399–proline 483 form the KH-like domain.

Belongs to the TRAFAC class TrmE-Era-EngA-EngB-Septin-like GTPase superfamily. EngA (Der) GTPase family. In terms of assembly, associates with the 50S ribosomal subunit.

Its function is as follows. GTPase that plays an essential role in the late steps of ribosome biogenesis. The chain is GTPase Der from Chlamydia pneumoniae (Chlamydophila pneumoniae).